We begin with the raw amino-acid sequence, 329 residues long: tRNA pseudouridine synthase B (329 aa).

Histidine 43 provides a ligand contact to substrate. Aspartate 48 (nucleophile) is an active-site residue. Residues tyrosine 76, tyrosine 179, and leucine 200 each contribute to the substrate site.

Belongs to the pseudouridine synthase TruB family. Type 1 subfamily.

The catalysed reaction is uridine(55) in tRNA = pseudouridine(55) in tRNA. Responsible for synthesis of pseudouridine from uracil-55 in the psi GC loop of transfer RNAs. This is tRNA pseudouridine synthase B from Yersinia enterocolitica serotype O:8 / biotype 1B (strain NCTC 13174 / 8081).